A 715-amino-acid polypeptide reads, in one-letter code: Protein psiH (715 aa).

A signal peptide spans 1–20 (MNYLKPTIFLILCLVTFVYS). The Extracellular portion of the chain corresponds to 21–651 (QPSTLTIQGT…ICKTGAVVST (631 aa)). Positions 115–256 (NYDSKKQVYV…YDYCGVCSGD (142 aa)) constitute a PA14 domain. Asn-149, Asn-377, Asn-528, and Asn-622 each carry an N-linked (GlcNAc...) asparagine glycan. A helical membrane pass occupies residues 652-672 (AVIAGVTVAGAVALGVFIYGG). Topologically, residues 673–715 (KRGYDYWKESRNVQFSGSNSNPLYEQNPNGSGVNPLYNDNSAL) are cytoplasmic. The interval 690–715 (SNSNPLYEQNPNGSGVNPLYNDNSAL) is disordered.

Belongs to the prespore-cell-inducing factor family.

Its subcellular location is the membrane. The sequence is that of Protein psiH (psiH) from Dictyostelium discoideum (Social amoeba).